Here is a 112-residue protein sequence, read N- to C-terminus: Urease subunit beta (112 aa).

It belongs to the urease beta subunit family. Heterotrimer of UreA (gamma), UreB (beta) and UreC (alpha) subunits. Three heterotrimers associate to form the active enzyme.

The protein localises to the cytoplasm. It catalyses the reaction urea + 2 H2O + H(+) = hydrogencarbonate + 2 NH4(+). The protein operates within nitrogen metabolism; urea degradation; CO(2) and NH(3) from urea (urease route): step 1/1. The chain is Urease subunit beta from Polaromonas sp. (strain JS666 / ATCC BAA-500).